The chain runs to 331 residues: Phenylalanine--tRNA ligase alpha subunit (331 aa).

Glu254 serves as a coordination point for Mg(2+).

It belongs to the class-II aminoacyl-tRNA synthetase family. Phe-tRNA synthetase alpha subunit type 1 subfamily. In terms of assembly, tetramer of two alpha and two beta subunits. The cofactor is Mg(2+).

Its subcellular location is the cytoplasm. The catalysed reaction is tRNA(Phe) + L-phenylalanine + ATP = L-phenylalanyl-tRNA(Phe) + AMP + diphosphate + H(+). In Blochmanniella pennsylvanica (strain BPEN), this protein is Phenylalanine--tRNA ligase alpha subunit.